A 133-amino-acid polypeptide reads, in one-letter code: Small ribosomal subunit protein uS9 (133 aa).

The disordered stretch occupies residues 102–133 (KPKGLLTRDPREVERKKYGLKKARRAPQFSKR). Basic and acidic residues predominate over residues 107 to 118 (LTRDPREVERKK). Residues 119 to 133 (YGLKKARRAPQFSKR) are compositionally biased toward basic residues.

The protein belongs to the universal ribosomal protein uS9 family.

The sequence is that of Small ribosomal subunit protein uS9 from Deinococcus deserti (strain DSM 17065 / CIP 109153 / LMG 22923 / VCD115).